The following is a 177-amino-acid chain: Disulfide bond formation protein B (177 aa).

Over 1–14 (MMVWNWIDRTPRRV) the chain is Cytoplasmic. The helical transmembrane segment at 15–31 (LALISLACVALLACGLY) threads the bilayer. Residues 32–49 (LQHVVGLVPCPMCIVQRY) lie on the Periplasmic side of the membrane. Cysteine 41 and cysteine 44 are disulfide-bonded. A helical membrane pass occupies residues 50 to 64 (ALIGLALLTGLASAR). Residues 65 to 70 (SAKGWW) are Cytoplasmic-facing. Residues 71-89 (LTLSALAALTAGFGATVAA) traverse the membrane as a helical segment. The Periplasmic portion of the chain corresponds to 90–145 (RQSWLQWYPPQSVSCGRDFYGMIESFPLSRAIPMILRGSGDCAAVDWSLLGGSIAN). Cysteines 104 and 131 form a disulfide. Residues 146 to 164 (WSFLCFALLGLLLLALLAR) form a helical membrane-spanning segment. Topologically, residues 165–177 (GVRGARQRAPAPV) are cytoplasmic.

This sequence belongs to the DsbB family.

It is found in the cell inner membrane. Functionally, required for disulfide bond formation in some periplasmic proteins. Acts by oxidizing the DsbA protein. The sequence is that of Disulfide bond formation protein B from Verminephrobacter eiseniae (strain EF01-2).